A 175-amino-acid chain; its full sequence is Adenylate kinase isoenzyme 6 homolog (175 aa).

ATP is bound by residues G17, G19, K20, T21, and S22. The tract at residues 37–60 (DISSAVKEKELHDGWDSEFQCYIL) is NMPbind. The segment at 112–122 (KRNYNQHKITN) is LID. ATP is bound at residue R113.

The protein belongs to the adenylate kinase family. AK6 subfamily. In terms of assembly, monomer and homodimer. Interacts with small ribosomal subunit protein uS11. Not a structural component of 43S pre-ribosomes, but transiently interacts with them by binding to uS11.

It localises to the cytoplasm. The protein localises to the nucleus. It catalyses the reaction AMP + ATP = 2 ADP. It carries out the reaction ATP + H2O = ADP + phosphate + H(+). Functionally, broad-specificity nucleoside monophosphate (NMP) kinase that catalyzes the reversible transfer of the terminal phosphate group between nucleoside triphosphates and monophosphates. Also has ATPase activity. Involved in the late cytoplasmic maturation steps of the 40S ribosomal particles, specifically 18S rRNA maturation. While NMP activity is not required for ribosome maturation, ATPase activity is. Associates transiently with small ribosomal subunit protein uS11. ATP hydrolysis breaks the interaction with uS11. May temporarily remove uS11 from the ribosome to enable a conformational change of the ribosomal RNA that is needed for the final maturation step of the small ribosomal subunit. Its NMP activity may have a role in nuclear energy homeostasis. In Dictyostelium discoideum (Social amoeba), this protein is Adenylate kinase isoenzyme 6 homolog.